A 226-amino-acid polypeptide reads, in one-letter code: Leucyl/phenylalanyl-tRNA--protein transferase (226 aa).

This sequence belongs to the L/F-transferase family.

It localises to the cytoplasm. The catalysed reaction is N-terminal L-lysyl-[protein] + L-leucyl-tRNA(Leu) = N-terminal L-leucyl-L-lysyl-[protein] + tRNA(Leu) + H(+). It catalyses the reaction N-terminal L-arginyl-[protein] + L-leucyl-tRNA(Leu) = N-terminal L-leucyl-L-arginyl-[protein] + tRNA(Leu) + H(+). It carries out the reaction L-phenylalanyl-tRNA(Phe) + an N-terminal L-alpha-aminoacyl-[protein] = an N-terminal L-phenylalanyl-L-alpha-aminoacyl-[protein] + tRNA(Phe). Functionally, functions in the N-end rule pathway of protein degradation where it conjugates Leu, Phe and, less efficiently, Met from aminoacyl-tRNAs to the N-termini of proteins containing an N-terminal arginine or lysine. The protein is Leucyl/phenylalanyl-tRNA--protein transferase of Pseudomonas putida (strain ATCC 47054 / DSM 6125 / CFBP 8728 / NCIMB 11950 / KT2440).